We begin with the raw amino-acid sequence, 991 residues long: Receptor-like protein kinase HAIKU2 (991 aa).

The first 19 residues, 1–19 (MLRLLFIVRLLFLMPLASS), serve as a signal peptide directing secretion. The Extracellular portion of the chain corresponds to 20-616 (RSNHSEEVEN…KRKHLSKVDM (597 aa)). An N-linked (GlcNAc...) asparagine glycan is attached at N22. 21 LRR repeats span residues 66–90 (DGNVVEINLGSRSLINRDDDGRFTD), 99–123 (LKLLEKLVLGNNSLRGQIGTNLGKC), 125–148 (RLRYLDLGINNFSGEFPAIDSLQL), 150–170 (EFLSLNASGISGIFPWSSLKD), 171–196 (LKRLSFLSVGDNRFGSHPFPREILNL), 197–220 (TALQWVYLSNSSITGKIPEGIKNL), 221–244 (VRLQNLELSDNQISGEIPKEIVQL), 246–267 (NLRQLEIYSNDLTGKLPLGFRN), 269–291 (TNLRNFDASNNSLEGDLSELRFL), 292–314 (KNLVSLGMFENRLTGEIPKEFGD), 315–339 (FKSLAALSLYRNQLTGKLPRRLGSW), 341–363 (AFKYIDVSENFLEGQIPPYMCKK), 365–387 (VMTHLLMLQNRFTGQFPESYAKC), 388–411 (KTLIRLRVSNNSLSGMIPSGIWGL), 413–435 (NLQFLDLASNYFEGNLTGDIGNA), 436–459 (KSLGSLDLSNNRFSGSLPFQISGA), 461–482 (SLVSVNLRMNKFSGIVPESFGK), 483–508 (LKELSSLILDQNNLSGAIPKSLGLCT), 510–531 (LVDLNFAGNSLSEEIPESLGSL), 532–554 (KLLNSLNLSGNKLSGMIPVGLSA), and 555–578 (LKLSLLDLSNNQLTGSVPESLVSG). Residues N109, N135, N155, N195, and N206 are each glycosylated (N-linked (GlcNAc...) asparagine). Residues N267 and N278 are each glycosylated (N-linked (GlcNAc...) asparagine). 2 N-linked (GlcNAc...) asparagine glycosylation sites follow: N397 and N427. N495 is a glycosylation site (N-linked (GlcNAc...) asparagine). N-linked (GlcNAc...) asparagine glycosylation occurs at N538. The helical transmembrane segment at 617–637 (CFIVAAILALFFLFSYVIFKI) threads the bilayer. The Cytoplasmic segment spans residues 638-991 (RRDKLNKTVQ…SANDEITKVV (354 aa)). A Protein kinase domain is found at 671-970 (IKSENIIGRG…SMLEKIEPSY (300 aa)). ATP contacts are provided by residues 677 to 685 (IGRGGQGNV) and K699. Phosphotyrosine is present on residues Y762 and Y801. Residue D814 is the Proton acceptor of the active site. 2 positions are modified to phosphotyrosine: Y859 and Y866. T867 is subject to Phosphothreonine. Positions 972 to 991 (KNSGEASYGESANDEITKVV) are disordered.

Belongs to the protein kinase superfamily. Ser/Thr protein kinase family. As to expression, expressed in the endosperm of fertilized ovules.

The protein resides in the membrane. The catalysed reaction is L-seryl-[protein] + ATP = O-phospho-L-seryl-[protein] + ADP + H(+). The enzyme catalyses L-threonyl-[protein] + ATP = O-phospho-L-threonyl-[protein] + ADP + H(+). Functionally, modulates the seed size by negatively regulating the cellularization of syncytial endosperm. The chain is Receptor-like protein kinase HAIKU2 (IKU2) from Arabidopsis thaliana (Mouse-ear cress).